Consider the following 298-residue polypeptide: Tyrosine recombinase XerC (298 aa).

Residues 2–88 (TDLHTDVERY…ALRSFFDWLV (87 aa)) enclose the Core-binding (CB) domain. A Tyr recombinase domain is found at 109–288 (HLPKNIDVDD…DFQHLASVYD (180 aa)). Active-site residues include Arg148, Lys172, His240, Arg243, and His266. Tyr275 (O-(3'-phospho-DNA)-tyrosine intermediate) is an active-site residue.

This sequence belongs to the 'phage' integrase family. XerC subfamily. Forms a cyclic heterotetrameric complex composed of two molecules of XerC and two molecules of XerD, in which XerC interacts with XerD via its C-terminal region, XerD interacts with XerC via its C-terminal region and so on.

It localises to the cytoplasm. Its activity is regulated as follows. FtsK may regulate the catalytic switch between XerC and XerD in the heterotetrameric complex during the two steps of the recombination process. Its function is as follows. Site-specific tyrosine recombinase, which acts by catalyzing the cutting and rejoining of the recombining DNA molecules. Binds cooperatively to specific DNA consensus sequences that are separated from XerD binding sites by a short central region, forming the heterotetrameric XerC-XerD complex that recombines DNA substrates. The complex is essential to convert dimers of the bacterial chromosome into monomers to permit their segregation at cell division. It also contributes to the segregational stability of plasmids. In the complex XerC specifically exchanges the top DNA strands. In Escherichia coli O6:K15:H31 (strain 536 / UPEC), this protein is Tyrosine recombinase XerC.